The primary structure comprises 112 residues: CENP-A recruiting complex protein mis19 (112 aa).

As to quaternary structure, component of the CENP-A recruiting complex composed of at least mis16, mis19, mis19 and mis20.

The protein localises to the chromosome. Its subcellular location is the centromere. The protein resides in the kinetochore. Component of the CENP-A recruiting complex that ensures the integrity of mitotic spindles through maintenance of kinetochore factors mis6/CENP-I and cnp1/CENP-A. Links mis16 and mis18 to recruit CENP-A through interacting with non-sense-mediated mRNA decay (NMD) factors and the SWI/SNF complex. Also links mis18 with the CCAN/mis6/ctf19 complex to promote CENP-A assembly. This is CENP-A recruiting complex protein mis19 from Schizosaccharomyces pombe (strain 972 / ATCC 24843) (Fission yeast).